We begin with the raw amino-acid sequence, 712 residues long: Ferric reductase transmembrane component 6 (712 aa).

The N-terminal stretch at 1 to 17 (MHRTLLFLTWLISLTKA) is a signal peptide. The Vacuolar segment spans residues 18–167 (FNIKLPHTEK…HAHAYNLDIS (150 aa)). N-linked (GlcNAc...) asparagine glycosylation is found at N89, N112, and N124. Residues 168–188 (SVYGAYLTYYFVIVGIIAVFF) traverse the membrane as a helical segment. At 189–244 (HMSHYNGLNRALFASRFVNYIRGHFVLPTFLVDKHANHFKFLNVEVFTGLMPNSLE) the chain is on the cytoplasmic side. Residues 245-265 (AWIIFGYTLANIIFLSISYII) form a helical membrane-spanning segment. Over 266 to 287 (DPYNLIFNSHLSQFTRLLADRS) the chain is Vacuolar. A Ferric oxidoreductase domain is found at 287 to 411 (SGILAFTQFP…YCCWQHVKIF (125 aa)). A helical transmembrane segment spans residues 288-308 (GILAFTQFPLIIIFTARNSFL). The Cytoplasmic portion of the chain corresponds to 309-328 (EFLTGVKFNSFISFHKWIGR). H323 and H337 together coordinate heme. Residues 329 to 349 (IMVLNATIHSLSYSLFAIINH) form a helical membrane-spanning segment. Over 350 to 360 (AFKISNKQLYW) the chain is Vacuolar. Residues 361–381 (KFGIASITVLCVLLVLSLGIV) form a helical membrane-spanning segment. The Cytoplasmic segment spans residues 382-387 (RKRHYE). The chain crosses the membrane as a helical span at residues 388–408 (FFLYTHIILALLFFYCCWQHV). Heme is bound by residues H393 and H407. The Vacuolar portion of the chain corresponds to 409-416 (KIFNGWKE). The 135-residue stretch at 412 to 546 (NGWKEWIVVS…EGPYGPSNLH (135 aa)) folds into the FAD-binding FR-type domain. Residues 417–437 (WIVVSLLIWGLEKLFRIWNIL) traverse the membrane as a helical segment. At 438-712 (QFRFPKATLI…IEYFEEYQCW (275 aa)) the chain is on the cytoplasmic side. 493 to 499 (HPFTIID) lines the FAD pocket. NADP(+) is bound by residues 538 to 541 (GPYG) and 678 to 679 (CG).

The protein belongs to the ferric reductase (FRE) family. FAD serves as cofactor.

It is found in the vacuole membrane. It catalyses the reaction 2 a Fe(II)-siderophore + NADP(+) + H(+) = 2 a Fe(III)-siderophore + NADPH. Its function is as follows. Metalloreductase responsible for reducing vacuolar iron and copper prior to transport into the cytosol. Catalyzes the reduction of Fe(3+) to Fe(2+) and Cu(2+) to Cu(+), respectively, which can then be transported by the respective vacuolar efflux systems to the cytosol. The sequence is that of Ferric reductase transmembrane component 6 (FRE6) from Saccharomyces cerevisiae (strain ATCC 204508 / S288c) (Baker's yeast).